A 165-amino-acid polypeptide reads, in one-letter code: uncharacterized protein (165 aa).

The chain crosses the membrane as a helical span at residues 16 to 36 (ASISSILNFFFFYIMEYFVAV).

Belongs to the asfivirus F165R family.

Its subcellular location is the host membrane. This is an uncharacterized protein from African swine fever virus (strain Badajoz 1971 Vero-adapted) (Ba71V).